Here is a 286-residue protein sequence, read N- to C-terminus: Deaminated glutathione amidase (286 aa).

One can recognise a CN hydrolase domain in the interval 4–252; that stretch reads ANVALLQLCS…VSALKVKIET (249 aa). Glu42 serves as the catalytic Proton acceptor. Lys115 is a catalytic residue. The active-site Nucleophile is the Cys157.

It belongs to the carbon-nitrogen hydrolase superfamily. NIT1/NIT2 family.

It catalyses the reaction N-(4-oxoglutaryl)-L-cysteinylglycine + H2O = L-cysteinylglycine + 2-oxoglutarate. In terms of biological role, hydrolyzes deaminated glutathione (dGSH, 2-oxoglutaramate) to alpha-ketoglutarate (alpha-KG) and cysteinylglycine (specific activity 6.50 umol/min/mg), has less activity against alpha-ketoglutaramate (a-KGM, specific activity 0.20 umol/min/mg), very little activity on glutathione and none on L-glutamine. May function as a metabolite repair enzyme. The protein is Deaminated glutathione amidase of Yersinia enterocolitica.